The following is a 464-amino-acid chain: Siroheme synthase (464 aa).

Residues 1 to 203 (MEFLPLFHNL…GQGAEAERLL (203 aa)) are precorrin-2 dehydrogenase /sirohydrochlorin ferrochelatase. NAD(+)-binding positions include 22-23 (EI) and 43-44 (PE). Ser-128 is modified (phosphoserine). A uroporphyrinogen-III C-methyltransferase region spans residues 216-464 (GEVYLVGAGP…AWFEGAQATV (249 aa)). Pro-225 is an S-adenosyl-L-methionine binding site. Residue Asp-248 is the Proton acceptor of the active site. Residue Lys-270 is the Proton donor of the active site. Residues 301–303 (GGD), Ile-306, 331–332 (TA), Met-383, and Gly-412 each bind S-adenosyl-L-methionine.

This sequence in the N-terminal section; belongs to the precorrin-2 dehydrogenase / sirohydrochlorin ferrochelatase family. In the C-terminal section; belongs to the precorrin methyltransferase family.

It catalyses the reaction uroporphyrinogen III + 2 S-adenosyl-L-methionine = precorrin-2 + 2 S-adenosyl-L-homocysteine + H(+). The catalysed reaction is precorrin-2 + NAD(+) = sirohydrochlorin + NADH + 2 H(+). It carries out the reaction siroheme + 2 H(+) = sirohydrochlorin + Fe(2+). It participates in cofactor biosynthesis; adenosylcobalamin biosynthesis; precorrin-2 from uroporphyrinogen III: step 1/1. Its pathway is cofactor biosynthesis; adenosylcobalamin biosynthesis; sirohydrochlorin from precorrin-2: step 1/1. It functions in the pathway porphyrin-containing compound metabolism; siroheme biosynthesis; precorrin-2 from uroporphyrinogen III: step 1/1. The protein operates within porphyrin-containing compound metabolism; siroheme biosynthesis; siroheme from sirohydrochlorin: step 1/1. It participates in porphyrin-containing compound metabolism; siroheme biosynthesis; sirohydrochlorin from precorrin-2: step 1/1. In terms of biological role, multifunctional enzyme that catalyzes the SAM-dependent methylations of uroporphyrinogen III at position C-2 and C-7 to form precorrin-2 via precorrin-1. Then it catalyzes the NAD-dependent ring dehydrogenation of precorrin-2 to yield sirohydrochlorin. Finally, it catalyzes the ferrochelation of sirohydrochlorin to yield siroheme. The polypeptide is Siroheme synthase (Pseudomonas savastanoi pv. phaseolicola (strain 1448A / Race 6) (Pseudomonas syringae pv. phaseolicola (strain 1448A / Race 6))).